Consider the following 384-residue polypeptide: F-box/kelch-repeat protein At1g64840 (384 aa).

In terms of domain architecture, F-box spans 3–51 (PNWSQLPEELLNLISKNLDNCFDVVHARSICRSWRSAFPFPSSLSTLSY). 2 Kelch repeats span residues 87 to 137 (PEYF…PLGF) and 259 to 309 (NPFP…CCSA).

The polypeptide is F-box/kelch-repeat protein At1g64840 (Arabidopsis thaliana (Mouse-ear cress)).